The sequence spans 63 residues: Large ribosomal subunit protein uL30 (63 aa).

It belongs to the universal ribosomal protein uL30 family. Part of the 50S ribosomal subunit.

This Chlorobium chlorochromatii (strain CaD3) protein is Large ribosomal subunit protein uL30.